Reading from the N-terminus, the 150-residue chain is Arginine repressor (150 aa).

The protein belongs to the ArgR family.

The protein localises to the cytoplasm. It functions in the pathway amino-acid biosynthesis; L-arginine biosynthesis [regulation]. In terms of biological role, regulates arginine biosynthesis genes. This chain is Arginine repressor, found in Clostridium acetobutylicum (strain ATCC 824 / DSM 792 / JCM 1419 / IAM 19013 / LMG 5710 / NBRC 13948 / NRRL B-527 / VKM B-1787 / 2291 / W).